The primary structure comprises 133 residues: Small ribosomal subunit protein uS9 (133 aa).

Over residues 98 to 113 (RKPLKTEGHLSRDPRA) the composition is skewed to basic and acidic residues. A disordered region spans residues 98–133 (RKPLKTEGHLSRDPRAKERRKYGLKKARKAPQFSKR). Positions 114–133 (KERRKYGLKKARKAPQFSKR) are enriched in basic residues.

This sequence belongs to the universal ribosomal protein uS9 family.

The sequence is that of Small ribosomal subunit protein uS9 from Synechococcus sp. (strain CC9902).